A 595-amino-acid polypeptide reads, in one-letter code: Chaperone protein HscA homolog (595 aa).

Belongs to the heat shock protein 70 family.

In terms of biological role, chaperone involved in the maturation of iron-sulfur cluster-containing proteins. Has a low intrinsic ATPase activity which is markedly stimulated by HscB. In Rickettsia africae (strain ESF-5), this protein is Chaperone protein HscA homolog.